A 113-amino-acid polypeptide reads, in one-letter code: Small ribosomal subunit protein uS15 (113 aa).

It belongs to the universal ribosomal protein uS15 family. In terms of assembly, part of the 30S ribosomal subunit. Forms a bridge to the 50S subunit in the 70S ribosome, contacting the 23S rRNA.

One of the primary rRNA binding proteins, it binds directly to 16S rRNA where it helps nucleate assembly of the platform of the 30S subunit by binding and bridging several RNA helices of the 16S rRNA. Functionally, forms an intersubunit bridge (bridge B4) with the 23S rRNA of the 50S subunit in the ribosome. The protein is Small ribosomal subunit protein uS15 of Haemophilus influenzae (strain PittEE).